Reading from the N-terminus, the 313-residue chain is tRNA dimethylallyltransferase (313 aa).

Residue 10–17 coordinates ATP; sequence GPTASGKT. Residue 12–17 coordinates substrate; the sequence is TASGKT. Interaction with substrate tRNA regions lie at residues 35-38, 159-163, and 240-245; these read DSAM, QRIQR, and RCVGYR.

Belongs to the IPP transferase family. In terms of assembly, monomer. The cofactor is Mg(2+).

It catalyses the reaction adenosine(37) in tRNA + dimethylallyl diphosphate = N(6)-dimethylallyladenosine(37) in tRNA + diphosphate. Its function is as follows. Catalyzes the transfer of a dimethylallyl group onto the adenine at position 37 in tRNAs that read codons beginning with uridine, leading to the formation of N6-(dimethylallyl)adenosine (i(6)A). This chain is tRNA dimethylallyltransferase, found in Legionella pneumophila (strain Paris).